We begin with the raw amino-acid sequence, 103 residues long: MAAQVNGDDNDRQITLIDDQGNEELYEVLFTFHSDDYDKSYVLLYPAAVGDDEDIEVQAFSYDADDTGDVTSSDLHEIESDDEWNMVQGVLNTFLDDDRLSGK.

The protein belongs to the UPF0473 family.

The chain is UPF0473 protein LBA0420 from Lactobacillus acidophilus (strain ATCC 700396 / NCK56 / N2 / NCFM).